Consider the following 617-residue polypeptide: Autophagy-related protein 20 (617 aa).

A disordered region spans residues 1–83; sequence MWNDEDNNPY…KRKPGGYDSR (83 aa). Positions 20–31 are enriched in low complexity; the sequence is QSSSINPTSPST. Residues 48 to 58 show a composition bias toward basic and acidic residues; that stretch reads DNEHNHGVIHD. Residues 59–68 are compositionally biased toward acidic residues; that stretch reads DSDDDDEDLT. The PX domain maps to 89–209; sequence YENPKLSILI…RFFDPNASWS (121 aa). The a 1,2-diacyl-sn-glycero-3-phospho-(1D-myo-inositol-3-phosphate) site is built by Arg-126, Ser-128, Lys-152, and Arg-175. A coiled-coil region spans residues 403–440; the sequence is QQDLTTEELSKKRALLDQLEQSEAEARRIENYLSSSQQ. A disordered region spans residues 434 to 516; that stretch reads YLSSSQQISP…SGNSITNKIF (83 aa). Positions 454 to 463 are enriched in basic and acidic residues; it reads PPSHQRRDGS. Residues 480 to 500 show a composition bias toward polar residues; the sequence is DFSSHTPSASQGLPERSTSVP.

This sequence belongs to the sorting nexin family. Forms a complex with SNX4/ATG24 and ATG17.

It is found in the endosome membrane. Its subcellular location is the preautophagosomal structure membrane. Required for cytoplasm to vacuole transport (Cvt), pexophagy and mitophagy. Also involved in endoplasmic reticulum-specific autophagic process and is essential for the survival of cells subjected to severe ER stress. Functions in protein retrieval from the endocytic pathway. Required for proper sorting of the v-SNARE protein SNC1. Autophagy is required for proper vegetative growth, asexual/sexual reproduction, and full virulence. Autophagy is particularly involved in the biosynthesis of deoxynivalenol (DON), an important virulence determinant. This Gibberella zeae (strain ATCC MYA-4620 / CBS 123657 / FGSC 9075 / NRRL 31084 / PH-1) (Wheat head blight fungus) protein is Autophagy-related protein 20.